The following is a 243-amino-acid chain: UPF0758 protein PCC7424_2073 (243 aa).

Positions 112–235 constitute an MPN domain; that stretch reads VEINDPVSAV…HQSLRTVTDL (124 aa). His-184, His-186, and Asp-197 together coordinate Zn(2+). A JAMM motif motif is present at residues 184 to 197; that stretch reads HNHPSGNVAPSQED.

Belongs to the UPF0758 family.

The polypeptide is UPF0758 protein PCC7424_2073 (Gloeothece citriformis (strain PCC 7424) (Cyanothece sp. (strain PCC 7424))).